We begin with the raw amino-acid sequence, 629 residues long: Hemocyanin G chain (629 aa).

6 residues coordinate Cu cation: histidine 171, histidine 175, histidine 202, histidine 322, histidine 326, and histidine 362. Asparagine 447 and asparagine 506 each carry an N-linked (GlcNAc...) asparagine glycan. Cysteines 534 and 582 form a disulfide. Asparagine 615 carries N-linked (GlcNAc...) asparagine glycosylation.

The protein belongs to the tyrosinase family. Hemocyanin subfamily. As to quaternary structure, tarantula hemocyanin is a 24-chain polymer with seven different chains identified. In terms of tissue distribution, hemolymph.

It is found in the secreted. Its subcellular location is the extracellular space. Functionally, hemocyanins are copper-containing oxygen carriers occurring freely dissolved in the hemolymph of many mollusks and arthropods. This is Hemocyanin G chain (HCG) from Aphonopelma sp. (American tarantula).